The sequence spans 174 residues: Large ribosomal subunit protein uL15 (174 aa).

2 disordered regions span residues 1–57 (MKLH…QMRI) and 147–174 (PWVV…PQKA). Gly residues predominate over residues 21–35 (RGIGSGKGKTGGKGM).

It belongs to the universal ribosomal protein uL15 family. As to quaternary structure, part of the 50S ribosomal subunit.

Functionally, binds to the 23S rRNA. This Roseiflexus sp. (strain RS-1) protein is Large ribosomal subunit protein uL15.